The following is a 143-amino-acid chain: NADH-quinone oxidoreductase subunit A (143 aa).

3 helical membrane passes run 8–28, 63–83, and 90–110; these read FGNV…GYLT, FYVV…LYPW, and LGVF…LGLV.

It belongs to the complex I subunit 3 family. In terms of assembly, NDH-1 is composed of 14 different subunits. Subunits NuoA, H, J, K, L, M, N constitute the membrane sector of the complex.

The protein resides in the cell inner membrane. It catalyses the reaction a quinone + NADH + 5 H(+)(in) = a quinol + NAD(+) + 4 H(+)(out). NDH-1 shuttles electrons from NADH, via FMN and iron-sulfur (Fe-S) centers, to quinones in the respiratory chain. The immediate electron acceptor for the enzyme in this species is believed to be a menaquinone. Couples the redox reaction to proton translocation (for every two electrons transferred, four hydrogen ions are translocated across the cytoplasmic membrane), and thus conserves the redox energy in a proton gradient. In Chlorobium phaeobacteroides (strain DSM 266 / SMG 266 / 2430), this protein is NADH-quinone oxidoreductase subunit A.